A 93-amino-acid polypeptide reads, in one-letter code: NAD(P)H-quinone oxidoreductase subunit 4L, chloroplastic (93 aa).

The next 2 membrane-spanning stretches (helical) occupy residues 1–21 (MLEH…SGLI) and 60–80 (IFAI…LSIA).

The protein belongs to the complex I subunit 4L family. NDH is composed of at least 16 different subunits, 5 of which are encoded in the nucleus.

The protein localises to the plastid. Its subcellular location is the chloroplast thylakoid membrane. It catalyses the reaction a plastoquinone + NADH + (n+1) H(+)(in) = a plastoquinol + NAD(+) + n H(+)(out). It carries out the reaction a plastoquinone + NADPH + (n+1) H(+)(in) = a plastoquinol + NADP(+) + n H(+)(out). NDH shuttles electrons from NAD(P)H:plastoquinone, via FMN and iron-sulfur (Fe-S) centers, to quinones in the photosynthetic chain and possibly in a chloroplast respiratory chain. The immediate electron acceptor for the enzyme in this species is believed to be plastoquinone. Couples the redox reaction to proton translocation, and thus conserves the redox energy in a proton gradient. The polypeptide is NAD(P)H-quinone oxidoreductase subunit 4L, chloroplastic (Anthoceros angustus (Hornwort)).